The following is a 512-amino-acid chain: Gamma-aminobutyric acid receptor subunit beta-2 (512 aa).

The first 25 residues, 1–25 (MWRVRKRGYFGIWSFPLIIAAVCAQ), serve as a signal peptide directing secretion. At 26–241 (SVNDPSNMSL…LSLSFKLKRN (216 aa)) the chain is on the extracellular side. N-linked (GlcNAc...) asparagine glycosylation is found at Asn-32 and Asn-104. A histamine-binding site is contributed by Tyr-121. An intrachain disulfide couples Cys-160 to Cys-174. Asn-173 carries N-linked (GlcNAc...) asparagine glycosylation. Histamine-binding positions include 180-181 (SY) and Thr-226. Residues Tyr-181 and Thr-226 each contribute to the 4-aminobutanoate site. Residues 242–262 (IGYFILQTYMPSILITILSWV) form a helical membrane-spanning segment. Over 263–272 (SFWINYDASA) the chain is Cytoplasmic. The chain crosses the membrane as a helical span at residues 273–292 (ARVALGITTVLTMTTINTHL). The Extracellular segment spans residues 293-310 (RETLPKIPYVKAIDMYLM). Residues 311–331 (GCFVFVFMALLEYALVNYIFF) form a helical membrane-spanning segment. The Cytoplasmic portion of the chain corresponds to 332–490 (GRGPQRQKKA…LTDVNAIDRW (159 aa)). The residue at position 441 (Tyr-441) is a Phosphotyrosine. A helical transmembrane segment spans residues 491 to 511 (SRIFFPVVFSFFNIVYWLYYV). Position 512 (Asn-512) is a topological domain, extracellular.

This sequence belongs to the ligand-gated ion channel (TC 1.A.9) family. Gamma-aminobutyric acid receptor (TC 1.A.9.5) subfamily. GABRB2 sub-subfamily. As to quaternary structure, heteropentamer, formed by a combination of alpha (GABRA1-6), beta (GABRB1-3), gamma (GABRG1-3), delta (GABRD), epsilon (GABRE), rho (GABRR1-3), pi (GABRP) and theta (GABRQ) chains, each subunit exhibiting distinct physiological and pharmacological properties. Interacts with UBQLN1. May interact with KIF21B. Identified in a complex of 720 kDa composed of LHFPL4, NLGN2, GABRA1, GABRB2, GABRG2 and GABRB3. Isoform 1 and isoform 2 show reduced expression in schizophrenic brain. Isoform 3 shows increased expression in schizophrenic and bipolar disorder brains while isoform 4 shows reduced expression.

Its subcellular location is the postsynaptic cell membrane. The protein resides in the cell membrane. It localises to the cytoplasmic vesicle membrane. It catalyses the reaction chloride(in) = chloride(out). Its activity is regulated as follows. Allosterically activated by benzodiazepines. Allosterically activated by the anesthetic etomidate. Inhibited by the antagonist bicuculline. Potentiated by histamine. Beta subunit of the heteropentameric ligand-gated chloride channel gated by gamma-aminobutyric acid (GABA), a major inhibitory neurotransmitter in the brain. GABA-gated chloride channels, also named GABA(A) receptors (GABAAR), consist of five subunits arranged around a central pore and contain GABA active binding site(s) located at the alpha and beta subunit interface(s). When activated by GABA, GABAARs selectively allow the flow of chloride anions across the cell membrane down their electrochemical gradient. Chloride influx into the postsynaptic neuron following GABAAR opening decreases the neuron ability to generate a new action potential, thereby reducing nerve transmission. GABAARs containing alpha-1 and beta-2 or -3 subunits exhibit synaptogenic activity; the gamma-2 subunit being necessary but not sufficient to induce rapid synaptic contacts formation. Extrasynaptic beta-2 receptors contribute to the tonic GABAergic inhibition. Beta-containing GABAARs can simultaneously bind GABA and histamine where histamine binds at the interface of two neighboring beta subunits, which may be involved in the regulation of sleep and wakefulness. This Homo sapiens (Human) protein is Gamma-aminobutyric acid receptor subunit beta-2.